The sequence spans 511 residues: Activin receptor type-2B (511 aa).

A signal peptide spans 1 to 20 (MGASVALTFLLLLATFRAGS). Residues 21–136 (GHDEVETREC…KPQPSASVLN (116 aa)) are Extracellular-facing. Residues cysteine 30 and cysteine 61 are joined by a disulfide bond. 2 N-linked (GlcNAc...) asparagine glycosylation sites follow: asparagine 43 and asparagine 67. Cystine bridges form between cysteine 86/cysteine 105, cysteine 92/cysteine 104, and cysteine 106/cysteine 111. Residues 137 to 157 (ILIYSLLPIVGLSMAILLAFW) form a helical membrane-spanning segment. The Cytoplasmic segment spans residues 158 to 511 (MYRHRKPSYG…VDLPPKESSI (354 aa)). The region spanning 189–477 (LQLLDIKARG…LSAGCVEERI (289 aa)) is the Protein kinase domain. ATP-binding positions include 195 to 203 (KARGRFGCV) and lysine 216. The active-site Proton acceptor is the aspartate 320.

This sequence belongs to the protein kinase superfamily. TKL Ser/Thr protein kinase family. TGFB receptor subfamily.

It is found in the membrane. It catalyses the reaction L-threonyl-[receptor-protein] + ATP = O-phospho-L-threonyl-[receptor-protein] + ADP + H(+). It carries out the reaction L-seryl-[receptor-protein] + ATP = O-phospho-L-seryl-[receptor-protein] + ADP + H(+). Its function is as follows. Receptor for activin A, activin B and inhibin A. Involved in transmembrane signaling. The chain is Activin receptor type-2B (acvr2b) from Xenopus laevis (African clawed frog).